The chain runs to 338 residues: DNA-directed RNA polymerase subunit alpha (338 aa).

Positions 1 to 225 (MLISQRPTIT…ELFGLARELN (225 aa)) are alpha N-terminal domain (alpha-NTD). Positions 240 to 338 (TEYIAAYSMP…YIDVEAEDSE (99 aa)) are alpha C-terminal domain (alpha-CTD). The tract at residues 319–338 (LEGYDAETGGYIDVEAEDSE) is disordered.

The protein belongs to the RNA polymerase alpha chain family. As to quaternary structure, homodimer. The RNAP catalytic core consists of 2 alpha, 1 beta, 1 beta' and 1 omega subunit. When a sigma factor is associated with the core the holoenzyme is formed, which can initiate transcription.

The enzyme catalyses RNA(n) + a ribonucleoside 5'-triphosphate = RNA(n+1) + diphosphate. Its function is as follows. DNA-dependent RNA polymerase catalyzes the transcription of DNA into RNA using the four ribonucleoside triphosphates as substrates. The chain is DNA-directed RNA polymerase subunit alpha from Corynebacterium glutamicum (strain R).